The chain runs to 253 residues: MPFLKTLFRGALCSIACGASLFCAADVYRIIRNYPELMPVSYMDEKGSPTGFETELIRKIAEQAQLDLKEEFVANFGDTLTALENGKADLAMATISVTPARQQIFDFTTPYFRVNPFAFITKDDSIKTIQDLANKKVSVWTGSNHEQKIKEIQKEGTGSVIPAKSIFLAVKAVIQGEADVAVGDDAYMLNFADRYKQHNLKAVIDRSTEPESYAIAVRKGDQALKKKIDDALLQLKRDGTIDALTKKWYPNRT.

The N-terminal stretch at 1-23 is a signal peptide; that stretch reads MPFLKTLFRGALCSIACGASLFC.

The protein belongs to the bacterial solute-binding protein 3 family.

The protein localises to the periplasm. The protein is Amino-acid-binding protein AabA (aabA) of Dichelobacter nodosus (Bacteroides nodosus).